The following is a 64-amino-acid chain: Protein DsrB (64 aa).

Belongs to the DsrB family.

The polypeptide is Protein DsrB (Salmonella enteritidis PT4 (strain P125109)).